We begin with the raw amino-acid sequence, 182 residues long: NADH-quinone oxidoreductase subunit B 2 (182 aa).

Residues cysteine 55, cysteine 56, cysteine 120, and cysteine 150 each contribute to the [4Fe-4S] cluster site.

It belongs to the complex I 20 kDa subunit family. NDH-1 is composed of 14 different subunits. Subunits NuoB, C, D, E, F, and G constitute the peripheral sector of the complex. It depends on [4Fe-4S] cluster as a cofactor.

Its subcellular location is the cell inner membrane. It catalyses the reaction a quinone + NADH + 5 H(+)(in) = a quinol + NAD(+) + 4 H(+)(out). In terms of biological role, NDH-1 shuttles electrons from NADH, via FMN and iron-sulfur (Fe-S) centers, to quinones in the respiratory chain. The immediate electron acceptor for the enzyme in this species is believed to be ubiquinone. Couples the redox reaction to proton translocation (for every two electrons transferred, four hydrogen ions are translocated across the cytoplasmic membrane), and thus conserves the redox energy in a proton gradient. The chain is NADH-quinone oxidoreductase subunit B 2 from Sorangium cellulosum (strain So ce56) (Polyangium cellulosum (strain So ce56)).